The primary structure comprises 319 residues: Cell division protein FtsQ (319 aa).

Residues 1–53 (MDSREDMVPDVLLEAPNPRRRQSADTSTERPTRPARREQGYARVTPRGERMGN) form a disordered region. The Cytoplasmic portion of the chain corresponds to 1–70 (MDSREDMVPD…PDFFAWFDPR (70 aa)). Over residues 27-52 (STERPTRPARREQGYARVTPRGERMG) the composition is skewed to basic and acidic residues. The chain crosses the membrane as a helical span at residues 71 to 87 (WLWVPLMVCLAVGGYWA). The Periplasmic segment spans residues 88 to 319 (YEPLEKLLER…NATRNAPTHP (232 aa)). Residues 97-166 (RPFKSVVVEG…DTLVVKIAEQ (70 aa)) form the POTRA domain.

Belongs to the FtsQ/DivIB family. FtsQ subfamily. Part of a complex composed of FtsB, FtsL and FtsQ.

Its subcellular location is the cell inner membrane. Functionally, essential cell division protein. May link together the upstream cell division proteins, which are predominantly cytoplasmic, with the downstream cell division proteins, which are predominantly periplasmic. May control correct divisome assembly. This chain is Cell division protein FtsQ, found in Cellvibrio japonicus (strain Ueda107) (Pseudomonas fluorescens subsp. cellulosa).